Reading from the N-terminus, the 78-residue chain is WAP four-disulfide core domain protein 12 (78 aa).

The N-terminal stretch at 1 to 21 is a signal peptide; sequence MWPNSILVLTVLLISSTLVTG. The region spanning 25 to 72 is the WAP domain; sequence KGAEKGVCPPDNVRCIRGEDPQCHNDNDCKDQKICCYWHCGFKCVQPV. 4 cysteine pairs are disulfide-bonded: C32–C60, C39–C64, C47–C59, and C53–C68.

The protein localises to the secreted. Antibacterial protein. Putative acid-stable proteinase inhibitor. This Rattus norvegicus (Rat) protein is WAP four-disulfide core domain protein 12.